A 193-amino-acid polypeptide reads, in one-letter code: Segregation and condensation protein B (193 aa).

The protein belongs to the ScpB family. As to quaternary structure, homodimer. Homodimerization may be required to stabilize the binding of ScpA to the Smc head domains. Component of a cohesin-like complex composed of ScpA, ScpB and the Smc homodimer, in which ScpA and ScpB bind to the head domain of Smc. The presence of the three proteins is required for the association of the complex with DNA.

The protein localises to the cytoplasm. Participates in chromosomal partition during cell division. May act via the formation of a condensin-like complex containing Smc and ScpA that pull DNA away from mid-cell into both cell halves. This is Segregation and condensation protein B from Shouchella clausii (strain KSM-K16) (Alkalihalobacillus clausii).